The sequence spans 407 residues: Heparan-sulfate 6-O-sulfotransferase 1-B (407 aa).

The Cytoplasmic portion of the chain corresponds to 8–14 (MVERTSK). Residues 15–35 (FLLIVVGSVFFMLILYQYVAP) traverse the membrane as a helical; Signal-anchor for type II membrane protein segment. The Lumenal segment spans residues 36–407 (GVINFGSPHG…DYMNHIINGW (372 aa)). 92–100 (HIQKTGGTT) lines the 3'-phosphoadenylyl sulfate pocket. Residues 122 to 123 (KK), Arg139, Trp144, and His149 contribute to the substrate site. His149 (proton acceptor) is an active-site residue. 3'-phosphoadenylyl sulfate-binding residues include Arg183 and Ser191. His195 and Trp202 together coordinate substrate. Asn262 is a glycosylation site (N-linked (GlcNAc...) asparagine). 315–317 (MQY) contributes to the 3'-phosphoadenylyl sulfate binding site. Asn318 carries an N-linked (GlcNAc...) asparagine glycan. 321 to 322 (RA) contacts 3'-phosphoadenylyl sulfate. Residue Asn329 is glycosylated (N-linked (GlcNAc...) asparagine).

The protein belongs to the sulfotransferase 6 family. In terms of tissue distribution, during early somitogenesis, first expressed in floor plate and somites. During mid-somitogenesis, expressed strongly in somites and more weakly in eye and hindbrain. During late somitogenesis, expressed in eye, hindbrain and posterior somites. At 24 hours post-fertilization (hpf), expressed in lens, forebrain, hindbrain, otic vesicle, anterior spinal cord neurons and posterior somites. At 36 hpf, expressed in the retinal ciliary marginal zone, brain, pancreas and weakly in pectoral fin. At 48 hpf, expressed in the retinal ciliary marginal zone, retinal ganglion cells, rhombomeres, otic vesicle and weakly in pectoral fin.

Its subcellular location is the membrane. The catalysed reaction is alpha-D-glucosaminyl-[heparan sulfate](n) + 3'-phosphoadenylyl sulfate = 6-sulfo-alpha-D-glucosaminyl-[heparan sulfate](n) + adenosine 3',5'-bisphosphate + H(+). Its function is as follows. 6-O-sulfation enzyme which catalyzes the transfer of sulfate from 3'-phosphoadenosine 5'-phosphosulfate (PAPS) to position 6 of the N-sulfoglucosamine residue (GlcNS) of heparan sulfate. The sequence is that of Heparan-sulfate 6-O-sulfotransferase 1-B from Danio rerio (Zebrafish).